Here is a 728-residue protein sequence, read N- to C-terminus: 1,4-alpha-glucan branching enzyme GlgB (728 aa).

The active-site Nucleophile is D405. E458 acts as the Proton donor in catalysis.

This sequence belongs to the glycosyl hydrolase 13 family. GlgB subfamily. In terms of assembly, monomer.

The enzyme catalyses Transfers a segment of a (1-&gt;4)-alpha-D-glucan chain to a primary hydroxy group in a similar glucan chain.. It functions in the pathway glycan biosynthesis; glycogen biosynthesis. Its function is as follows. Catalyzes the formation of the alpha-1,6-glucosidic linkages in glycogen by scission of a 1,4-alpha-linked oligosaccharide from growing alpha-1,4-glucan chains and the subsequent attachment of the oligosaccharide to the alpha-1,6 position. The polypeptide is 1,4-alpha-glucan branching enzyme GlgB (Salmonella paratyphi B (strain ATCC BAA-1250 / SPB7)).